Here is a 104-residue protein sequence, read N- to C-terminus: Zinc-containing ferredoxin-1 (104 aa).

Residues 2-37 form an N-terminal extension region; that stretch reads GIDPNYRTNRQVVGEHSGHKVYGPVEPPKVLGIHGT. His-17 and His-20 together coordinate Zn(2+). The residue at position 30 (Lys-30) is an N6-methyllysine. His-35 is a binding site for Zn(2+). 4Fe-4S ferredoxin-type domains lie at 38–66 and 75–104; these read IVGV…WYDT and KADP…VKPP. Cys-46 and Cys-52 together coordinate [3Fe-4S] cluster. A [4Fe-4S] cluster-binding site is contributed by Cys-56. Asp-77 contacts Zn(2+). [4Fe-4S] cluster is bound by residues Cys-84, Cys-87, and Cys-90. Cys-94 lines the [3Fe-4S] cluster pocket.

The cofactor is [3Fe-4S] cluster. [4Fe-4S] cluster is required as a cofactor. Zn(2+) serves as cofactor.

Functionally, ferredoxins are iron-sulfur proteins that transfer electrons in a wide variety of metabolic reactions. This chain is Zinc-containing ferredoxin-1 (zfx1), found in Sulfurisphaera tokodaii (strain DSM 16993 / JCM 10545 / NBRC 100140 / 7) (Sulfolobus tokodaii).